The primary structure comprises 448 residues: Glucose-6-phosphate isomerase (448 aa).

The Proton donor role is filled by Glu-290. Catalysis depends on residues His-311 and Lys-425.

This sequence belongs to the GPI family.

The protein resides in the cytoplasm. The enzyme catalyses alpha-D-glucose 6-phosphate = beta-D-fructose 6-phosphate. Its pathway is carbohydrate biosynthesis; gluconeogenesis. It participates in carbohydrate degradation; glycolysis; D-glyceraldehyde 3-phosphate and glycerone phosphate from D-glucose: step 2/4. Functionally, catalyzes the reversible isomerization of glucose-6-phosphate to fructose-6-phosphate. The chain is Glucose-6-phosphate isomerase from Levilactobacillus brevis (strain ATCC 367 / BCRC 12310 / CIP 105137 / JCM 1170 / LMG 11437 / NCIMB 947 / NCTC 947) (Lactobacillus brevis).